Consider the following 245-residue polypeptide: 3-deoxy-manno-octulosonate cytidylyltransferase (245 aa).

It belongs to the KdsB family.

Its subcellular location is the cytoplasm. The enzyme catalyses 3-deoxy-alpha-D-manno-oct-2-ulosonate + CTP = CMP-3-deoxy-beta-D-manno-octulosonate + diphosphate. The protein operates within nucleotide-sugar biosynthesis; CMP-3-deoxy-D-manno-octulosonate biosynthesis; CMP-3-deoxy-D-manno-octulosonate from 3-deoxy-D-manno-octulosonate and CTP: step 1/1. It participates in bacterial outer membrane biogenesis; lipopolysaccharide biosynthesis. Its function is as follows. Activates KDO (a required 8-carbon sugar) for incorporation into bacterial lipopolysaccharide in Gram-negative bacteria. This is 3-deoxy-manno-octulosonate cytidylyltransferase from Rhodopseudomonas palustris (strain HaA2).